Reading from the N-terminus, the 514-residue chain is 2,3-bisphosphoglycerate-independent phosphoglycerate mutase (514 aa).

Residues D14 and S64 each contribute to the Mn(2+) site. The Phosphoserine intermediate role is filled by S64. Substrate is bound by residues H125, R155–D156, R187, R193, R263–R266, and K337. Residues D404, H408, D445, H446, and H463 each coordinate Mn(2+).

It belongs to the BPG-independent phosphoglycerate mutase family. Monomer. It depends on Mn(2+) as a cofactor.

The catalysed reaction is (2R)-2-phosphoglycerate = (2R)-3-phosphoglycerate. Its pathway is carbohydrate degradation; glycolysis; pyruvate from D-glyceraldehyde 3-phosphate: step 3/5. In terms of biological role, catalyzes the interconversion of 2-phosphoglycerate and 3-phosphoglycerate. This is 2,3-bisphosphoglycerate-independent phosphoglycerate mutase from Hahella chejuensis (strain KCTC 2396).